Reading from the N-terminus, the 322-residue chain is Quinolinate synthase (322 aa).

Iminosuccinate is bound by residues His-37 and Ser-54. Residue Cys-99 participates in [4Fe-4S] cluster binding. Iminosuccinate contacts are provided by residues 125-127 (YIN) and Ser-142. Cys-185 lines the [4Fe-4S] cluster pocket. Residues 211-213 (HPE) and Thr-228 each bind iminosuccinate. A [4Fe-4S] cluster-binding site is contributed by Cys-278.

The protein belongs to the quinolinate synthase family. Type 2 subfamily. Requires [4Fe-4S] cluster as cofactor.

It is found in the cytoplasm. The enzyme catalyses iminosuccinate + dihydroxyacetone phosphate = quinolinate + phosphate + 2 H2O + H(+). It participates in cofactor biosynthesis; NAD(+) biosynthesis; quinolinate from iminoaspartate: step 1/1. Functionally, catalyzes the condensation of iminoaspartate with dihydroxyacetone phosphate to form quinolinate. The polypeptide is Quinolinate synthase (Chlorobaculum parvum (strain DSM 263 / NCIMB 8327) (Chlorobium vibrioforme subsp. thiosulfatophilum)).